Reading from the N-terminus, the 249-residue chain is 5'-nucleotidase SurE (249 aa).

A divalent metal cation-binding residues include Asp-8, Asp-9, Ser-39, and Asn-91.

It belongs to the SurE nucleotidase family. A divalent metal cation serves as cofactor.

The protein resides in the cytoplasm. It carries out the reaction a ribonucleoside 5'-phosphate + H2O = a ribonucleoside + phosphate. Its function is as follows. Nucleotidase that shows phosphatase activity on nucleoside 5'-monophosphates. This Pseudomonas entomophila (strain L48) protein is 5'-nucleotidase SurE.